We begin with the raw amino-acid sequence, 318 residues long: Ribose-phosphate pyrophosphokinase 1 (318 aa).

96-101 (RQDKKD) is a binding site for ATP. Aspartate 128, histidine 130, aspartate 139, and aspartate 143 together coordinate Mg(2+). Histidine 130 is an ATP binding site. Positions 212–227 (KDRVAILVDDMADTCG) are binding of phosphoribosylpyrophosphate.

It belongs to the ribose-phosphate pyrophosphokinase family. In terms of assembly, homodimer. The active form is probably a hexamer composed of 3 homodimers. Requires Mg(2+) as cofactor.

It catalyses the reaction D-ribose 5-phosphate + ATP = 5-phospho-alpha-D-ribose 1-diphosphate + AMP + H(+). It participates in metabolic intermediate biosynthesis; 5-phospho-alpha-D-ribose 1-diphosphate biosynthesis; 5-phospho-alpha-D-ribose 1-diphosphate from D-ribose 5-phosphate (route I): step 1/1. Its activity is regulated as follows. Activated by magnesium and inorganic phosphate. In terms of biological role, catalyzes the synthesis of phosphoribosylpyrophosphate (PRPP) that is essential for nucleotide synthesis. The chain is Ribose-phosphate pyrophosphokinase 1 (PRPS1) from Bos taurus (Bovine).